Reading from the N-terminus, the 274-residue chain is 2,3,4,5-tetrahydropyridine-2,6-dicarboxylate N-succinyltransferase (274 aa).

2 residues coordinate substrate: Arg104 and Asp141.

This sequence belongs to the transferase hexapeptide repeat family. Homotrimer.

Its subcellular location is the cytoplasm. It catalyses the reaction (S)-2,3,4,5-tetrahydrodipicolinate + succinyl-CoA + H2O = (S)-2-succinylamino-6-oxoheptanedioate + CoA. Its pathway is amino-acid biosynthesis; L-lysine biosynthesis via DAP pathway; LL-2,6-diaminopimelate from (S)-tetrahydrodipicolinate (succinylase route): step 1/3. The sequence is that of 2,3,4,5-tetrahydropyridine-2,6-dicarboxylate N-succinyltransferase from Sodalis glossinidius (strain morsitans).